Consider the following 167-residue polypeptide: NAD(P)H-quinone oxidoreductase subunit I, chloroplastic (167 aa).

4Fe-4S ferredoxin-type domains lie at 55 to 84 and 95 to 124; these read GRIH…VDWI and KNYS…MTEE. The [4Fe-4S] cluster site is built by cysteine 64, cysteine 67, cysteine 70, cysteine 74, cysteine 104, cysteine 107, cysteine 110, and cysteine 114.

The protein belongs to the complex I 23 kDa subunit family. As to quaternary structure, NDH is composed of at least 16 different subunits, 5 of which are encoded in the nucleus. Requires [4Fe-4S] cluster as cofactor.

It is found in the plastid. The protein localises to the chloroplast thylakoid membrane. The catalysed reaction is a plastoquinone + NADH + (n+1) H(+)(in) = a plastoquinol + NAD(+) + n H(+)(out). The enzyme catalyses a plastoquinone + NADPH + (n+1) H(+)(in) = a plastoquinol + NADP(+) + n H(+)(out). Its function is as follows. NDH shuttles electrons from NAD(P)H:plastoquinone, via FMN and iron-sulfur (Fe-S) centers, to quinones in the photosynthetic chain and possibly in a chloroplast respiratory chain. The immediate electron acceptor for the enzyme in this species is believed to be plastoquinone. Couples the redox reaction to proton translocation, and thus conserves the redox energy in a proton gradient. The protein is NAD(P)H-quinone oxidoreductase subunit I, chloroplastic of Adiantum capillus-veneris (Maidenhair fern).